The primary structure comprises 361 residues: 45 kDa calcium-binding protein (361 aa).

The signal sequence occupies residues 1–35 (MVWLVAMTPRQSSLCGLAAHGLWFLGLVLLMDATA). Asn-39 is a glycosylation site (N-linked (GlcNAc...) asparagine). EF-hand domains are found at residues 97-132 (RSRR…KTAE) and 136-171 (EAVK…SKGH). Ser-98 bears the Phosphoserine mark. Asp-110, Asn-112, Asp-114, Arg-116, Glu-121, Asp-149, Asp-151, Asp-153, His-155, and Glu-160 together coordinate Ca(2+). Thr-192 bears the Phosphothreonine mark. EF-hand domains are found at residues 196–231 (LGNL…HSRG), 232–267 (MLKF…TVEN), 277–312 (WVKD…MNEY), and 313–348 (NALN…FTGS). Asp-212 contacts Ca(2+). Thr-216 is subject to Phosphothreonine. The Ca(2+) site is built by Glu-219, Asp-245, Asp-247, Asp-249, Gln-251, and Glu-256. The residue at position 264 (Thr-264) is a Phosphothreonine. Positions 290, 292, and 294 each coordinate Ca(2+). The residue at position 298 (Thr-298) is a Phosphothreonine. Positions 301, 326, 328, 330, 332, and 337 each coordinate Ca(2+). The interval 308 to 361 (PMNEYNALNEAKQMIAIADENQNHHLEPEEILKYSEFFTGSKLMDYARNVHEEF) is necessary for intracellular retention in Golgi apparatus lumen.

This sequence belongs to the CREC family. In terms of tissue distribution, ubiquitous.

Its subcellular location is the golgi apparatus lumen. In terms of biological role, may regulate calcium-dependent activities in the endoplasmic reticulum lumen or post-ER compartment. This is 45 kDa calcium-binding protein (Sdf4) from Mus musculus (Mouse).